We begin with the raw amino-acid sequence, 346 residues long: Protein NDL1 (346 aa).

The protein belongs to the NDRG family. As to quaternary structure, interacts with GB1. Interacts with the heterodimers formed by GB1 and GG1, or GB1 and GG2. Interacts with RGS1. As to expression, expressed in root vasculature, cotyledons, leaves, petals, mature stamens and pollen grains.

It localises to the cytoplasm. Interacts with the heterotrimeric G protein beta subunit GB1 and plays an significant role in GB1-dependent regulation of lateral root formation. Involved in a signaling pathway that modulates root auxin transport and auxin gradients. Acts partially by positively regulating the auxin carrier PIN2 and AUX1. Acts, together with GB1 as positive regulator of meristem initiation and branching. GB1 and NDL1 positively regulate basipetal inflorescence auxin transport and modulate MAX2 expression in shoots, which regulates organ and lateral meristem formation by the establishment and maintenance of auxin gradients. In Arabidopsis thaliana (Mouse-ear cress), this protein is Protein NDL1.